A 461-amino-acid chain; its full sequence is D-phenylhydantoinase (461 aa).

Positions 59, 61, and 151 each coordinate a divalent metal cation. Position 151 is an N6-carboxylysine (lysine 151). Residue tyrosine 156 participates in substrate binding. Residues histidine 182 and histidine 239 each coordinate a divalent metal cation. Serine 286 contacts substrate. Aspartate 313 provides a ligand contact to a divalent metal cation. Residue asparagine 335 participates in substrate binding.

This sequence belongs to the metallo-dependent hydrolases superfamily. Hydantoinase/dihydropyrimidinase family. In terms of assembly, homotetramer. Requires a divalent metal cation as cofactor. In terms of processing, carboxylation allows a single lysine to coordinate two divalent metal cations.

It catalyses the reaction D-5-phenylhydantoin + H2O = N-carbamoyl-D-phenylglycine + H(+). Catalyzes the stereospecific hydrolysis of the cyclic amide bond of D-hydantoin derivatives with an aromatic side chains at the 5'-position. Has no activity on dihydropyrimidines. The physiological function is unknown. The protein is D-phenylhydantoinase of Escherichia coli O9:H4 (strain HS).